Reading from the N-terminus, the 520-residue chain is Sodium-dependent dicarboxylate transporter SdcS (520 aa).

The next 14 membrane-spanning stretches (helical) occupy residues 30 to 50, 55 to 75, 77 to 97, 104 to 124, 160 to 180, 207 to 227, 242 to 262, 298 to 318, 323 to 343, 362 to 382, 399 to 419, 428 to 448, 452 to 472, and 491 to 511; these read AGQLIGLILGPLLFLLTLLFF, LPWEGVYVLAITLWIATWWIT, AIPIAATSLLPIVLLPLGHIL, SEYGNDIIFLFLGGFILAIAM, SMFVSNTAAVMIMIPIGLAII, IGYAGTIGGLGTLIGTPPLII, FAKWMIVGIPTVIVLLGITWL, KVVQTIFVLASLLWITREFLL, VTSSVADGTIAIFISILLFVI, ELPWGVLILFGGGLALAKGIS, GVSPILIVIVITIFVLFLTEV, MILPILATLSVAVGVHPLLLM, AMAANCAYMLPVGTPPNAIIF, and LISAIIIILVVYYVMPIVLGI.

This sequence belongs to the SLC13A/DASS transporter (TC 2.A.47) family. NADC subfamily.

Its subcellular location is the cell membrane. In terms of biological role, mediates the transport of the dicarboxylates fumarate, malate, and succinate across the cytoplasmic membrane via a Na(+)-electrochemical gradient. The protein is Sodium-dependent dicarboxylate transporter SdcS (sdcS) of Staphylococcus aureus (strain bovine RF122 / ET3-1).